The primary structure comprises 99 residues: uncharacterized protein (99 aa).

Residues 3–68 adopt a coiled-coil conformation; the sequence is ERLKAITNLL…EKFDSNRKFY (66 aa).

This is an uncharacterized protein from Aquifex aeolicus (strain VF5).